A 183-amino-acid chain; its full sequence is Apo-citrate lyase phosphoribosyl-dephospho-CoA transferase (183 aa).

It belongs to the CitX family.

The enzyme catalyses apo-[citrate lyase ACP] + 2'-(5''-triphospho-alpha-D-ribosyl)-3'-dephospho-CoA = holo-[citrate lyase ACP] + diphosphate. In terms of biological role, transfers 2-(5''-triphosphoribosyl)-3'-dephosphocoenzyme-A on a serine residue to the apo-acyl carrier protein (gamma chain) of the citrate lyase to yield holo-acyl carrier protein. This Escherichia coli O139:H28 (strain E24377A / ETEC) protein is Apo-citrate lyase phosphoribosyl-dephospho-CoA transferase.